We begin with the raw amino-acid sequence, 356 residues long: Zinc finger protein 830 (356 aa).

A coiled-coil region spans residues 11 to 33 (AQEELRKLMKAKQRESSSKKRIE). The segment at 47 to 69 (CVVCNSLIKSELLWPAHILGKQH) adopts a C2H2-type zinc-finger fold. The segment at 71 to 195 (EKVAELKGTK…PTSSADNLPA (125 aa)) is disordered. A compositionally biased stretch (polar residues) spans 80–90 (KATTSSPSNTI). 2 stretches are compositionally biased toward basic and acidic residues: residues 99-118 (KGSE…EDHP) and 125-135 (LPEEFFEKEKT). Residues 150–165 (DYEDVDDDDAEEGEEY) are compositionally biased toward acidic residues. Residues 278–322 (AEEDEEGRLDRQIDEIDEQIQCYRRVEHLRDRKDTLQDAKMEVLK) adopt a coiled-coil conformation.

The protein localises to the nucleus. It localises to the chromosome. Its subcellular location is the nucleus speckle. Functionally, may act as an important regulator of the cell cycle that participates in the maintenance of genome integrity. In Xenopus laevis (African clawed frog), this protein is Zinc finger protein 830.